The primary structure comprises 659 residues: MSAYTSLNFLFLLTFFIGSLRVSAQLQDPTYVGHVCTNRISRNSIYFSNLQTLLTSLSSNNAYFSLGSHSLTKGQNSDMVFGLYLCKGDLSPESCRECVIFAAKDTRSRCPGGKEFLIQYDECMLGYSDRNIFMDTVTTTTIITWNTQKVTADQSDRFNDAVLSLMKKSAEEAANSTSKKFAVKKSDFSSSQSLYASVQCIPDLTSEDCVMCLQQSIKELYFNKVGGRFLVPSCNSRYEVYPFYKETIEGTVLPPPVSAPPLPLVSTPSFPPGKGKNSTVIIIAIVVPVAISVLICVAVFSFHASKRAKKTYDTPEEDDITTAGSLQFDFKVIEAATDKFSMCNKLGQGGFGQVYKGTLPNGVQVAVKRLSKTSGQGEKEFKNEVVVVAKLQHRNLVKLLGFCLEREEKILVYEFVSNKSLDYFLFDSRMQSQLDWTTRYKIIGGIARGILYLHQDSRLTIIHRDLKAGNILLDADMNPKVADFGMARIFEIDQTEAHTRRVVGTYGYMSPEYAMYGQFSMKSDVYSFGVLVLEIISGRKNSSLYQMDASFGNLVTYTWRLWSDGSPLDLVDSSFRDSYQRNEIIRCIHIALLCVQEDTENRPTMSAIVQMLTTSSIALAVPQPPGFFFRSNHEQAGPSMDKSSLCSIDAASITILAPR.

The N-terminal stretch at 1–24 (MSAYTSLNFLFLLTFFIGSLRVSA) is a signal peptide. Over 25-279 (QLQDPTYVGH…FPPGKGKNST (255 aa)) the chain is Extracellular. Gnk2-homologous domains are found at residues 28 to 132 (DPTY…DRNI) and 138 to 243 (TTTT…VYPF). N-linked (GlcNAc...) asparagine glycans are attached at residues asparagine 175 and asparagine 277. Residues 280 to 300 (VIIIAIVVPVAISVLICVAVF) traverse the membrane as a helical segment. Topologically, residues 301 to 659 (SFHASKRAKK…AASITILAPR (359 aa)) are cytoplasmic. One can recognise a Protein kinase domain in the interval 340-619 (FSMCNKLGQG…QMLTTSSIAL (280 aa)). Residues 346–354 (LGQGGFGQV) and lysine 368 each bind ATP. Tyrosine 413 carries the phosphotyrosine modification. The active-site Proton acceptor is the aspartate 465. Threonine 505 is modified (phosphothreonine). The residue at position 513 (tyrosine 513) is a Phosphotyrosine.

This sequence belongs to the protein kinase superfamily. Ser/Thr protein kinase family. CRK subfamily. Interacts with CRKIP1 (KAPP), CRKIP2 and CRKIP3, three kinase-associated type 2C proteins.

The protein resides in the membrane. It catalyses the reaction L-seryl-[protein] + ATP = O-phospho-L-seryl-[protein] + ADP + H(+). The enzyme catalyses L-threonyl-[protein] + ATP = O-phospho-L-threonyl-[protein] + ADP + H(+). Its function is as follows. Involved in multiple distinct defense responses. May function as a disease resistance (R) protein. The sequence is that of Cysteine-rich receptor-like protein kinase 5 (CRK5) from Arabidopsis thaliana (Mouse-ear cress).